The sequence spans 465 residues: Poly(A) polymerase I (465 aa).

Residues aspartate 80, aspartate 82, and aspartate 162 contribute to the active site. A disordered region spans residues 430 to 465 (APPEQKGMLNELDDDPAPRRRRSRPRKRAPRREGTV). The span at 448-459 (RRRRSRPRKRAP) shows a compositional bias: basic residues.

It belongs to the tRNA nucleotidyltransferase/poly(A) polymerase family.

It catalyses the reaction RNA(n) + ATP = RNA(n)-3'-adenine ribonucleotide + diphosphate. In terms of biological role, adds poly(A) tail to the 3' end of many RNAs, which usually targets these RNAs for decay. Plays a significant role in the global control of gene expression, through influencing the rate of transcript degradation, and in the general RNA quality control. This chain is Poly(A) polymerase I, found in Salmonella typhi.